Here is a 258-residue protein sequence, read N- to C-terminus: Tryptophan synthase alpha chain (258 aa).

Active-site proton acceptor residues include Glu47 and Asp58.

Belongs to the TrpA family. As to quaternary structure, tetramer of two alpha and two beta chains.

It carries out the reaction (1S,2R)-1-C-(indol-3-yl)glycerol 3-phosphate + L-serine = D-glyceraldehyde 3-phosphate + L-tryptophan + H2O. It functions in the pathway amino-acid biosynthesis; L-tryptophan biosynthesis; L-tryptophan from chorismate: step 5/5. The alpha subunit is responsible for the aldol cleavage of indoleglycerol phosphate to indole and glyceraldehyde 3-phosphate. The sequence is that of Tryptophan synthase alpha chain from Bacillus anthracis (strain CDC 684 / NRRL 3495).